A 65-amino-acid polypeptide reads, in one-letter code: Hirudin-3 (65 aa).

An interaction with thrombin active site region spans residues 1-3; the sequence is VVY. Cystine bridges form between cysteine 6–cysteine 14, cysteine 16–cysteine 28, and cysteine 22–cysteine 39. Positions 39 to 65 are disordered; the sequence is CVTGEGTPKPQSHNDGDFEEIPEEYLQ. Threonine 45 carries O-linked (GalNAc...) threonine glycosylation. An interaction with fibrinogen-binding exosite of thrombin region spans residues 55–65; sequence DFEEIPEEYLQ. Over residues 55–65 the composition is skewed to acidic residues; sequence DFEEIPEEYLQ. At tyrosine 63 the chain carries Sulfotyrosine.

It belongs to the protease inhibitor I14 (hirudin) family.

It is found in the secreted. Functionally, hirudin is a potent thrombin-specific protease inhibitor. It forms a stable non-covalent complex with alpha-thrombin, thereby abolishing its ability to cleave fibrinogen. The chain is Hirudin-3 from Hirudo medicinalis (Medicinal leech).